We begin with the raw amino-acid sequence, 261 residues long: MALNKNHSEGGGVIVNNTESILMSYDHVELTFNDMKNVPEAFKGTKKGTVYLTPYRVIFLSKGKDAMQSFMMPFYLMKDCEIKQPVFGANYIKGTVKAEAGGGWEGSASYKLTFTAGGAIEFGQRMLQVASQASRGEVPSGAYGYSYMPSGAYVYPPPVANGMYPCPPGYPYPPPPPEFYPGPPMMDGAMGYVQPPPPPYPGPMEPPVSGPDVPSTPAAEAKAAEAAASAYYNPGNPHNVYMPTSQPPPPPYYPPEDKKTQ.

The GRAM domain maps to 1–84 (MALNKNHSEG…YLMKDCEIKQ (84 aa)). At tyrosine 192 the chain carries Phosphotyrosine; by YES and SRC. The PPxY motif 1 signature appears at 196-200 (PPPPY). The segment covering 196–209 (PPPPYPGPMEPPVS) has biased composition (pro residues). Residues 196–261 (PPPPYPGPME…YYPPEDKKTQ (66 aa)) form a disordered region. Over residues 218–230 (AAEAKAAEAAASA) the composition is skewed to low complexity. Tyrosine 231 is modified (phosphotyrosine; by YES and SRC). A compositionally biased stretch (pro residues) spans 245–254 (SQPPPPPYYP). Residues 248 to 252 (PPPPY) carry the PPxY motif 2 motif.

In terms of assembly, binds to the WW domain of YAP1, WWP1 and WWP2. Interacts with NEDD4. Interacts with ESR1 and UBE3A. In terms of processing, phosphorylated in repsonse to EGF as well as estrogen and progesterone hormones. Tyr-192 and Tyr-231 are phosphorylated by YES and SRC inducing nuclear translocation. Ubiquitous.

Its subcellular location is the cytoplasm. The protein resides in the nucleus. In terms of biological role, acts as a transcriptional coactivator of estrogen and progesterone receptors (ESR1 and PGR) upon hormone activation. In presence of estrogen, binds to ESR1-responsive promoters. Synergizes with YAP1 to enhance PGR activity. Modulates expression of post-synaptic scaffolding proteins via regulation of ESR1, ESR2 and PGR. The chain is WW domain-binding protein 2 from Homo sapiens (Human).